The following is a 252-amino-acid chain: Thiamine thiazole synthase (252 aa).

NAD(+) is bound by residues S35, 54–55 (EK), G62, V126, and 152–154 (HVD). Residues D154 and H169 each coordinate Fe cation. Position 217 (M217) interacts with NAD(+). Residue R227 coordinates glycine.

This sequence belongs to the THI4 family. As to quaternary structure, homooctamer; tetramer of dimers. Requires Fe(2+) as cofactor.

It catalyses the reaction hydrogen sulfide + glycine + NAD(+) = ADP-5-ethyl-4-methylthiazole-2-carboxylate + nicotinamide + 3 H2O + H(+). It participates in cofactor biosynthesis; thiamine diphosphate biosynthesis. In terms of biological role, involved in the biosynthesis of the thiazole moiety of thiamine. Catalyzes the conversion of NAD and glycine to adenosine diphosphate 5-(2-hydroxyethyl)-4-methylthiazole-2-carboxylate (ADT), an adenylated thiazole intermediate, using free sulfide as a source of sulfur. In Pyrococcus horikoshii (strain ATCC 700860 / DSM 12428 / JCM 9974 / NBRC 100139 / OT-3), this protein is Thiamine thiazole synthase.